Here is a 441-residue protein sequence, read N- to C-terminus: Tubulin beta-1 chain (441 aa).

Q11, E69, S138, G142, T143, G144, N204, and N226 together coordinate GTP. Position 69 (E69) interacts with Mg(2+).

The protein belongs to the tubulin family. As to quaternary structure, dimer of alpha and beta chains. A typical microtubule is a hollow water-filled tube with an outer diameter of 25 nm and an inner diameter of 15 nM. Alpha-beta heterodimers associate head-to-tail to form protofilaments running lengthwise along the microtubule wall with the beta-tubulin subunit facing the microtubule plus end conferring a structural polarity. Microtubules usually have 13 protofilaments but different protofilament numbers can be found in some organisms and specialized cells. Requires Mg(2+) as cofactor. In terms of tissue distribution, expressed primarily in touch receptor neurons.

It localises to the cytoplasm. Its subcellular location is the cytoskeleton. Functionally, TTubulin is the major constituent of microtubules, a cylinder consisting of laterally associated linear protofilaments composed of alpha- and beta-tubulin heterodimers. Microtubules grow by the addition of GTP-tubulin dimers to the microtubule end, where a stabilizing cap forms. Below the cap, tubulin dimers are in GDP-bound state, owing to GTPase activity of alpha-tubulin. Plays a role in mechanosensory transduction (touch sensitivity). In terms of biological role, mec-7 beta-tubulin is required for the production of 15-protofilament microtubules. In Caenorhabditis elegans, this protein is Tubulin beta-1 chain (mec-7).